A 189-amino-acid polypeptide reads, in one-letter code: UPF0301 protein PST_3956 (189 aa).

The protein belongs to the UPF0301 (AlgH) family.

In Stutzerimonas stutzeri (strain A1501) (Pseudomonas stutzeri), this protein is UPF0301 protein PST_3956.